Consider the following 228-residue polypeptide: uncharacterized protein (228 aa).

An HTH gntR-type domain is found at 11 to 78 (PPVNQQIYRI…PQRGSYVNKI (68 aa)). The segment at residues 38–57 (EKEVSVRFNVSRQPVREAFI) is a DNA-binding region (H-T-H motif).

This is an uncharacterized protein from Escherichia coli O6:H1 (strain CFT073 / ATCC 700928 / UPEC).